The chain runs to 368 residues: Probable leucine aminopeptidase TRV_05750 (368 aa).

The signal sequence occupies residues 1–18 (MKVFAIAAVAALTAVAVA). A glycan (N-linked (GlcNAc...) asparagine) is linked at Asn92. Positions 172 and 191 each coordinate Zn(2+). N-linked (GlcNAc...) asparagine glycosylation is found at Asn192 and Asn216. Glu230 and Asp257 together coordinate Zn(2+). Residues Cys301 and Cys305 are joined by a disulfide bond. Zn(2+) is bound at residue His334.

Belongs to the peptidase M28 family. M28E subfamily. As to quaternary structure, monomer. The cofactor is Zn(2+).

The protein localises to the secreted. Functionally, probable extracellular aminopeptidase which contributes to pathogenicity. The protein is Probable leucine aminopeptidase TRV_05750 of Trichophyton verrucosum (strain HKI 0517).